A 1661-amino-acid polypeptide reads, in one-letter code: MHHVLNSTRPDHRFWFYDDVTQYGRTKYLNYYTPLVLLIFTVLFITYNIWKHYYYYDVLHLKQKNPIDELLYSSTDEDEQSPLINNNTITTNYVDNNCTKDALKNRHFSLEKLKSVKVNGEPHGTPEIVRRGFIEKSRIILEFFLVLSQVIIHSFILLHYVNKNPEFTQQGTITGLVEWCALFIIVSLRLANVNQNFKFINKYPGNLWSVSFINYLALFISMILPFRSIFIHHINSPISRKYYISQISINLALFLLLFFARIRNNFAIIYKTDSWITPSPEPVTSIAGFICWAWLDSFVWKAHKVSIKVKDIWGLMMQDYSFFVVKKFRYFVDHKVKRKRIFSLNLFFFFSNYLVLQCFWAFLGSVLSFIPTVLLKRILEYVEDQSSAPSNLAWFYVTVMFVGRILVAICQAQALFFGRRVCIRMKSIIISEIYTKALRRKISTNKTKPSNEDPQEINDQKSINGDEESTSSANLGAIINLMAIDAFKVSEICGYLHSFLEAFVMTVVALALLYRLLGFAAIVGVLIIVAMLPLNYKLAKYIGDLQKKNLAVTDNRIQKLNEAFQAIRIIKYFSWEENFEKDINTIRENELSLLLMRSIVWSISSFLWFVTPTIVTAASFAYYIYVQGEVLTTPVAFTALSLFTLLRDPLDRLSDMLSFVVQSKVSLDRVQDFLNENDTKKYDQLTIDPNGNRFAFENSTISWDKDNQDFKLKDLNIEFKTGKLNVVIGPTGSGKTSLLMALLGEMYLLNGKVVVPALEPRQELIVDANGTTNSIAYCSQAAWLLNDTVKNNILFNSPFNEARYKAVVEACGLKRDFEILKAGDLTEIGEKGITLSGGQKQRVSLARALYSNARHVLLDDCLSAVDSHTASWIYDNCITGPLMEDRTCILVSHNIALTLRNAELVVLLEDGRVKDQGDPIDMLQKGLFGEDELVKSSILSRANSSANLAAKSSTSLSNLPAVKEQQVSVNNNSSHFEAKKLQKSLRTEAERTEDGKLIKEETKEEGVVGLDVYKWYLKIFGGWKIVSFLASLFLIAQLLYIGQSWWVRAWASHNVIAKIIPRAQRAIAFISKKASHLIDWRGSSQISMASAENQPSSGHSTMYYLVLYLIIGFAQALLGAGKTILNFVAGINASRKIFNMILNKVLHSKIRFFDATPTGRIMNRFSKDIEAIDQELTPYIQGAFYSLIECLSTVILITFITPQFLSVAIVVSILYYFVGYFYMAGSRELKRFESISRSPIYQHFSETLVGVTTIRAFGDEGRFMQENLHKIDENNKPFFYLWVANRWLAFRIDMIGSLVIFGAGLFILFNINNLDSGMAGISLTYAISFTEGALWLVRLYSEVEMNMNSVERVKEYMEIEQEPYNEHKEIPPPQWPQDGKIEVNDLSLRYAPNLPRVIKNVSFSVDAQSKIGIVGRTGAGKSTIITALFRFLEPETGHIKIDNIDISGVDLQRLRRSITIIPQDPTLFSGTIKTNLDPYDEFSDRQIFEALKRVNLISEEQLQQGATRETSNEASSTNSENVNKFLDLSSEISEGGSNLSQGQRQLMCLARSLLRSPKIILLDEATASIDYSSDAKIQETIRKEFQGSTILTIAHRLRSVIDYDKILVMDAGEVKEYDHPYSLLLNKQSAFYSMCEHSGELDILIELAKKAFVEKLNSKKD.

Residues 1 to 33 lie on the Lumenal side of the membrane; it reads MHHVLNSTRPDHRFWFYDDVTQYGRTKYLNYYT. Asparagine 6 carries an N-linked (GlcNAc...) asparagine glycan. The chain crosses the membrane as a helical span at residues 34–54; it reads PLVLLIFTVLFITYNIWKHYY. Residues 55-74 are Cytoplasmic-facing; sequence YYDVLHLKQKNPIDELLYSS. A helical transmembrane segment spans residues 75–95; it reads TDEDEQSPLINNNTITTNYVD. The Lumenal segment spans residues 96 to 133; the sequence is NNCTKDALKNRHFSLEKLKSVKVNGEPHGTPEIVRRGF. Asparagine 97 carries an N-linked (GlcNAc...) asparagine glycan. Residues 134-154 form a helical membrane-spanning segment; sequence IEKSRIILEFFLVLSQVIIHS. Topologically, residues 155–166 are cytoplasmic; it reads FILLHYVNKNPE. The chain crosses the membrane as a helical span at residues 167–187; the sequence is FTQQGTITGLVEWCALFIIVS. At 188–205 the chain is on the lumenal side; the sequence is LRLANVNQNFKFINKYPG. Residues 206–226 form a helical membrane-spanning segment; the sequence is NLWSVSFINYLALFISMILPF. The Cytoplasmic segment spans residues 227–345; it reads RSIFIHHINS…VKRKRIFSLN (119 aa). The chain crosses the membrane as a helical span at residues 346–366; that stretch reads LFFFFSNYLVLQCFWAFLGSV. Residues 354–662 enclose the ABC transmembrane type-1 1 domain; that stretch reads LVLQCFWAFL…LSDMLSFVVQ (309 aa). Over 367–393 the chain is Lumenal; it reads LSFIPTVLLKRILEYVEDQSSAPSNLA. Residues 394-414 traverse the membrane as a helical segment; it reads WFYVTVMFVGRILVAICQAQA. Topologically, residues 415-495 are cytoplasmic; sequence LFFGRRVCIR…AFKVSEICGY (81 aa). The interval 445-468 is disordered; sequence NKTKPSNEDPQEINDQKSINGDEE. A helical transmembrane segment spans residues 496 to 516; the sequence is LHSFLEAFVMTVVALALLYRL. Residues 517 to 519 lie on the Lumenal side of the membrane; the sequence is LGF. A helical transmembrane segment spans residues 520 to 540; the sequence is AAIVGVLIIVAMLPLNYKLAK. At 541–602 the chain is on the cytoplasmic side; it reads YIGDLQKKNL…LLLMRSIVWS (62 aa). The chain crosses the membrane as a helical span at residues 603–623; the sequence is ISSFLWFVTPTIVTAASFAYY. At 624-644 the chain is on the lumenal side; sequence IYVQGEVLTTPVAFTALSLFT. A helical membrane pass occupies residues 645–665; that stretch reads LLRDPLDRLSDMLSFVVQSKV. Over 666–1053 the chain is Cytoplasmic; sequence SLDRVQDFLN…SWWVRAWASH (388 aa). One can recognise an ABC transporter 1 domain in the interval 694–935; the sequence is FAFENSTISW…GLFGEDELVK (242 aa). Residue 729 to 736 coordinates ATP; sequence GPTGSGKT. Phosphoserine is present on residues serine 936, serine 940, and serine 955. An ABC transmembrane type-1 2 domain is found at 1026-1345; sequence VSFLASLFLI…LVRLYSEVEM (320 aa). A helical transmembrane segment spans residues 1054-1074; the sequence is NVIAKIIPRAQRAIAFISKKA. Residues 1075–1114 lie on the Lumenal side of the membrane; it reads SHLIDWRGSSQISMASAENQPSSGHSTMYYLVLYLIIGFA. Residues 1115–1135 traverse the membrane as a helical segment; it reads QALLGAGKTILNFVAGINASR. The Cytoplasmic portion of the chain corresponds to 1136–1178; it reads KIFNMILNKVLHSKIRFFDATPTGRIMNRFSKDIEAIDQELTP. A helical membrane pass occupies residues 1179–1199; it reads YIQGAFYSLIECLSTVILITF. A topological domain (lumenal) is located at residue isoleucine 1200. Residues 1201-1221 form a helical membrane-spanning segment; that stretch reads TPQFLSVAIVVSILYYFVGYF. Topologically, residues 1222–1292 are cytoplasmic; it reads YMAGSRELKR…VANRWLAFRI (71 aa). A helical membrane pass occupies residues 1293-1313; sequence DMIGSLVIFGAGLFILFNINN. Residues 1314–1315 are Lumenal-facing; the sequence is LD. A helical membrane pass occupies residues 1316–1336; that stretch reads SGMAGISLTYAISFTEGALWL. At 1337–1661 the chain is on the cytoplasmic side; sequence VRLYSEVEMN…FVEKLNSKKD (325 aa). One can recognise an ABC transporter 2 domain in the interval 1381 to 1636; the sequence is IEVNDLSLRY…KQSAFYSMCE (256 aa). 1415–1422 lines the ATP pocket; it reads GRTGAGKS.

Belongs to the ABC transporter superfamily. ABCC family. Conjugate transporter (TC 3.A.1.208) subfamily.

The protein localises to the vacuole membrane. In terms of biological role, vacuolar class C ABC transporter which regulates the translocation of phosphatidylcholine to the vacuole lumen, the release of lumenal calcium stores, and acts as a negative regulator of vacuole fusion. Exhibits ATP-dependent bile acid transport. In Saccharomyces cerevisiae (strain ATCC 204508 / S288c) (Baker's yeast), this protein is ATP-dependent bile acid permease (YBT1).